We begin with the raw amino-acid sequence, 156 residues long: MGETTEGKVVAQNKKARHDYFIEETFEAGIVLTGTEIKSIRAGKMNLKDSFARIKNGEAFLYNAHISEYEQGNRYNHEPTRPRKLLLHKKQINTLIGQTQQKGYSIVPLKVYIKNGFAKVLIGLAKGKKNYDKRETLRRKDAKREVERAIKERMRG.

This sequence belongs to the SmpB family.

The protein localises to the cytoplasm. Required for rescue of stalled ribosomes mediated by trans-translation. Binds to transfer-messenger RNA (tmRNA), required for stable association of tmRNA with ribosomes. tmRNA and SmpB together mimic tRNA shape, replacing the anticodon stem-loop with SmpB. tmRNA is encoded by the ssrA gene; the 2 termini fold to resemble tRNA(Ala) and it encodes a 'tag peptide', a short internal open reading frame. During trans-translation Ala-aminoacylated tmRNA acts like a tRNA, entering the A-site of stalled ribosomes, displacing the stalled mRNA. The ribosome then switches to translate the ORF on the tmRNA; the nascent peptide is terminated with the 'tag peptide' encoded by the tmRNA and targeted for degradation. The ribosome is freed to recommence translation, which seems to be the essential function of trans-translation. In Shouchella clausii (strain KSM-K16) (Alkalihalobacillus clausii), this protein is SsrA-binding protein.